A 360-amino-acid chain; its full sequence is 3-dehydroquinate synthase (360 aa).

NAD(+) contacts are provided by residues 71–76 (DGEAHK), 105–109 (GVVGD), 129–130 (TT), Lys142, and Lys151. Positions 184, 247, and 264 each coordinate Zn(2+).

The protein belongs to the sugar phosphate cyclases superfamily. Dehydroquinate synthase family. Requires Co(2+) as cofactor. Zn(2+) serves as cofactor. It depends on NAD(+) as a cofactor.

It is found in the cytoplasm. The catalysed reaction is 7-phospho-2-dehydro-3-deoxy-D-arabino-heptonate = 3-dehydroquinate + phosphate. Its pathway is metabolic intermediate biosynthesis; chorismate biosynthesis; chorismate from D-erythrose 4-phosphate and phosphoenolpyruvate: step 2/7. Functionally, catalyzes the conversion of 3-deoxy-D-arabino-heptulosonate 7-phosphate (DAHP) to dehydroquinate (DHQ). In Azoarcus sp. (strain BH72), this protein is 3-dehydroquinate synthase.